A 208-amino-acid polypeptide reads, in one-letter code: MKIIEIRHPLVQHKLGLMRINDISTKRFRELSSELSSLLTYVATDDLEIETVIIKGWNGLVKIARIKGKKITVVPILRAGLGMMDGVLEHVPSARISMIGVYRDEITLEPIPYFHKLVSRINERMAMVLDPMLATGGTVIATVDLLKKAGCHNIKILSLVAAPEGIAALEKKHPDVELYLASIDQKLNKYGYIIPGLGDAGDKIFGTK.

5-phospho-alpha-D-ribose 1-diphosphate is bound by residues arginine 78, arginine 103, and 130 to 138; that span reads DPMLATGGT. Uracil-binding positions include isoleucine 193 and 198–200; that span reads GDA. A 5-phospho-alpha-D-ribose 1-diphosphate-binding site is contributed by aspartate 199.

Belongs to the UPRTase family. It depends on Mg(2+) as a cofactor.

It carries out the reaction UMP + diphosphate = 5-phospho-alpha-D-ribose 1-diphosphate + uracil. The protein operates within pyrimidine metabolism; UMP biosynthesis via salvage pathway; UMP from uracil: step 1/1. Its activity is regulated as follows. Allosterically activated by GTP. Its function is as follows. Catalyzes the conversion of uracil and 5-phospho-alpha-D-ribose 1-diphosphate (PRPP) to UMP and diphosphate. The sequence is that of Uracil phosphoribosyltransferase from Blochmanniella floridana.